Consider the following 426-residue polypeptide: Histidine--tRNA ligase (426 aa).

Belongs to the class-II aminoacyl-tRNA synthetase family. In terms of assembly, homodimer.

It is found in the cytoplasm. It carries out the reaction tRNA(His) + L-histidine + ATP = L-histidyl-tRNA(His) + AMP + diphosphate + H(+). This chain is Histidine--tRNA ligase, found in Picosynechococcus sp. (strain ATCC 27264 / PCC 7002 / PR-6) (Agmenellum quadruplicatum).